The sequence spans 711 residues: Hydroperoxide isomerase ALOXE3 (711 aa).

Positions 2 to 119 (AVYRLCVTTG…TVELRPGTAR (118 aa)) constitute a PLAT domain. The region spanning 120 to 711 (TICQDSLPLL…PPLIENSVSI (592 aa)) is the Lipoxygenase domain. Residues His408, His413, His588, Asn592, and Ile711 each coordinate Fe cation.

This sequence belongs to the lipoxygenase family. Fe cation serves as cofactor. Skin specific.

The protein localises to the cytoplasm. It carries out the reaction a hydroperoxyeicosatetraenoate = a hydroxy-epoxy-eicosatetraenoate. The catalysed reaction is (8S)-hydroperoxy-(5Z,9E,11Z,14Z)-eicosatetraenoate = (10R)-hydroxy-(8S,9S)-epoxy-(5Z,11Z,14Z)-eicosatrienoate. It catalyses the reaction (12R)-hydroperoxy-(5Z,8Z,10E,14Z)-eicosatetraenoate = (8R)-hydroxy-(11R,12R)-epoxy-(5Z,9E,14Z)-eicosatrienoate. The enzyme catalyses (12S)-hydroperoxy-(5Z,8Z,10E,14Z)-eicosatetraenoate = (8R)-hydroxy-(11S,12S)-epoxy-(5Z,9E,14Z)-eicosatrienoate. It carries out the reaction (12S)-hydroperoxy-(5Z,8Z,10E,14Z)-eicosatetraenoate = (10R)-hydroxy-(11S,12S)-epoxy-(5Z,8Z,14Z)-eicosatrienoate. The catalysed reaction is (15S)-hydroperoxy-(5Z,8Z,11Z,13E)-eicosatetraenoate = (13R)-hydroxy-(14S,15S)-epoxy-(5Z,8Z,11Z)-eicosatrienoate. It catalyses the reaction (13S)-hydroperoxy-(9Z,11E)-octadecadienoate = 11-hydroxy-(12S,13S)-epoxy-(9Z)-octadecenoate. The enzyme catalyses (5S)-hydroperoxy-(6E,8Z,11Z,14Z)-eicosatetraenoate = 7R-hydroxy-5S,6S-epoxy-(8Z,11Z,14Z)-eicosatrienoate. It carries out the reaction N-[omega-(9R)-hydroperoxy-(10E,12Z)-octadecadienoyloxy]acyl-beta-D-glucosyl-(1&lt;-&gt;1)-octadecasphing-4E-enine = a N-[omega-(9R,10R)-epoxy-(13R)-hydroxy-(11E)-octadecenoyloxy]acyl-beta-D-glucosyl-(1&lt;-&gt;1)-sphing-4E-enine. The catalysed reaction is a N-[omega-(9R)-hydroperoxy-(10E,12Z)-octadecadienoyloxy]-acylsphin-4E-enine = a N-[omega-(9R,10R)-epoxy-(13R)-hydroxy-(11E)-octadecenoyloxy]-acylsphing-4E-enine. It catalyses the reaction a hydroperoxyeicosatetraenoate = an oxoeicosatetraenoate + H2O. The enzyme catalyses (8R)-hydroperoxy-(5Z,9E,11Z,14Z)-eicosatetraenoate = 8-oxo-(5Z,9E,11Z,14Z)-eicosatetraenoate + H2O. It carries out the reaction (8S)-hydroperoxy-(5Z,9E,11Z,14Z)-eicosatetraenoate = 8-oxo-(5Z,9E,11Z,14Z)-eicosatetraenoate + H2O. The catalysed reaction is (12R)-hydroperoxy-(5Z,8Z,10E,14Z)-eicosatetraenoate = 12-oxo-(5Z,8Z,10E,14Z)-eicosatetraenoate + H2O. It catalyses the reaction (12S)-hydroperoxy-(5Z,8Z,10E,14Z)-eicosatetraenoate = 12-oxo-(5Z,8Z,10E,14Z)-eicosatetraenoate + H2O. The enzyme catalyses (15S)-hydroperoxy-(5Z,8Z,11Z,13E)-eicosatetraenoate = 15-oxo-(5Z,8Z,11Z,13E)-eicosatetraenoate + H2O. It carries out the reaction (13S)-hydroperoxy-(9Z,11E)-octadecadienoate = 13-oxo-(9Z,11E)-octadecadienoate + H2O. Its pathway is lipid metabolism; hydroperoxy eicosatetraenoic acid biosynthesis. It functions in the pathway lipid metabolism; sphingolipid metabolism. Its function is as follows. Non-heme iron-containing lipoxygenase which is atypical in that it displays a prominent hydroperoxide isomerase activity and a reduced lipoxygenases activity. The hydroperoxide isomerase activity catalyzes the isomerization of hydroperoxides, derived from arachidonic and linoleic acid by ALOX12B, into hepoxilin-type epoxyalcohols and ketones. In presence of oxygen, oxygenates polyunsaturated fatty acids, including arachidonic acid, to produce fatty acid hydroperoxides. In the skin, acts downstream of ALOX12B on the linoleate moiety of esterified omega-hydroxyacyl-sphingosine (EOS) ceramides to produce an epoxy-ketone derivative, a crucial step in the conjugation of omega-hydroxyceramide to membrane proteins. Therefore plays a crucial role in the synthesis of corneocytes lipid envelope and the establishment of the skin barrier to water loss. In parallel, it may have a signaling function in barrier formation through the production of hepoxilins metabolites. Also plays a role in adipocyte differentiation through hepoxilin A3 and hepoxilin B3 production which in turn activate PPARG. Through the production of hepoxilins in the spinal cord, it may regulate inflammatory tactile allodynia. The chain is Hydroperoxide isomerase ALOXE3 from Mus musculus (Mouse).